The primary structure comprises 396 residues: MAKKVVTDLDLKDKKVLVRVDFNVPMKDGKITNDNRIVAALPTIEYILEQNGKAILFSHLGKVKTEEDKEGKSLRPVAARLSELLGKEVKFVPTTRGPELEKAIDELKDGEVLLFENTRFEDIDGKKESKNDPELGKYWASLGDVFVNDAFGTAHRAHASNVGIASNLESAAGFLMEKEIKFIGGVVDNPARPLVAILGGAKVSDKIGVIENLLTKADKVLVGGGMTFTFMAAKGQEIGKSLLEADKVELAKGLLEKAGDKLVLPVDAVVSKEFSNDAPFHTVSADSIPADEMGLDIGQATIDLFTKELQGAKTVVWNGPMGVFELSNFAKGTIGVCEAIANLTDATTIIGGGDSAAAAMDLGFADKFTHISTGGGASLEYLEGKELPGVASISDK.

Substrate is bound by residues D21–N23, R36, H59–K62, R119, and R156. ATP contacts are provided by residues K206, G294, E325, and G352–S355.

It belongs to the phosphoglycerate kinase family. In terms of assembly, monomer.

It is found in the cytoplasm. The catalysed reaction is (2R)-3-phosphoglycerate + ATP = (2R)-3-phospho-glyceroyl phosphate + ADP. It participates in carbohydrate degradation; glycolysis; pyruvate from D-glyceraldehyde 3-phosphate: step 2/5. This Listeria welshimeri serovar 6b (strain ATCC 35897 / DSM 20650 / CCUG 15529 / CIP 8149 / NCTC 11857 / SLCC 5334 / V8) protein is Phosphoglycerate kinase.